We begin with the raw amino-acid sequence, 153 residues long: Aspartate carbamoyltransferase regulatory chain (153 aa).

C109, C114, C138, and C141 together coordinate Zn(2+).

This sequence belongs to the PyrI family. As to quaternary structure, contains catalytic and regulatory chains. Zn(2+) is required as a cofactor.

Involved in allosteric regulation of aspartate carbamoyltransferase. The chain is Aspartate carbamoyltransferase regulatory chain from Escherichia coli (strain ATCC 8739 / DSM 1576 / NBRC 3972 / NCIMB 8545 / WDCM 00012 / Crooks).